The following is a 290-amino-acid chain: Ribonuclease HIII (290 aa).

One can recognise an RNase H type-2 domain in the interval 78–290 (LPLIGTDEVG…FKNTEKAKNA (213 aa)). D84, E85, and D187 together coordinate a divalent metal cation.

The protein belongs to the RNase HII family. RnhC subfamily. The cofactor is Mn(2+). Mg(2+) serves as cofactor.

The protein resides in the cytoplasm. The catalysed reaction is Endonucleolytic cleavage to 5'-phosphomonoester.. Functionally, endonuclease that specifically degrades the RNA of RNA-DNA hybrids. This Streptococcus pneumoniae (strain P1031) protein is Ribonuclease HIII.